We begin with the raw amino-acid sequence, 429 residues long: MLPRLLLLICAPLCEPAELFLIASPSHPTEGSPVTLTCKMPFLQSSDAQFQFCFFRDTRALGPGWSSSPKLQIAAMWKEDTGSYWCEAQTMASKVLRSRRSQINVHRVPVADVSLETQPPGGQVMEGDRLVLICSVAMGTGDITFLWYKGAVGLNLQSKTQRSLTAEYEIPSVRESDAEQYYCVAENGYGPSPSGLVSITVRIPVSRPILMLRAPRAQAAVEDVLELHCEALRGSPPILYWFYHEDITLGSRSAPSGGGASFNLSLTEEHSGNYSCEANNGLGAQRSEAVTLNFTVPTGARSNHLTSGVIEGLLSTLGPATVALLFCYGLKRKIGRRSARDPLRSLPSPLPQEFTYLNSPTPGQLQPIYENVNVVSGDEVYSLAYYNQPEQESVAAETLGTHMEDKVSLDIYSRLRKANITDVDYEDAM.

The signal sequence occupies residues 1-16; it reads MLPRLLLLICAPLCEP. Ig-like C2-type domains lie at 17–104, 109–200, and 208–291; these read AELF…SQIN, PVAD…VSIT, and PILM…EAVT. The Extracellular segment spans residues 17-307; it reads AELFLIASPS…TGARSNHLTS (291 aa). 3 disulfides stabilise this stretch: Cys-38–Cys-86, Cys-134–Cys-183, and Cys-229–Cys-276. N-linked (GlcNAc...) asparagine glycosylation occurs at Asn-293. Residues 308 to 328 form a helical membrane-spanning segment; that stretch reads GVIEGLLSTLGPATVALLFCY. Residues 329 to 429 lie on the Cytoplasmic side of the membrane; that stretch reads GLKRKIGRRS…ITDVDYEDAM (101 aa). Short sequence motifs (ITIM motif) lie at residues 354-359, 367-372, 379-384, 410-415, and 423-428; these read FTYLNS, PIYENV, EVYSLA, DIYSRL, and VDYEDA.

Interacts with ABL1. Interacts with GRB2 and SOS1. Interacts with SHIP-1/INPP5D. Post-translationally, phosphorylated on tyrosines upon activation. Primarily expressed in secondary lymphoid tissues by mature subsets of B-cells. Detected in spleen, lymph node, heart, skeletal muscle, kidney, liver and placenta. Specifically expressed by mature B lineage cells with higher expression in naive versus memory B-cells (at protein level).

Its subcellular location is the cell membrane. Type I transmembrane surface glycoprotein preferentially expressed by B-cells that regulates BCR-mediated signaling responses. Recruits ABL1 as the intracellular effector molecule to enhance B-cell activation. Also plays a negative role by suppressing ERK activation under homeostatic and BCR-stimulated conditions in a GRB2-dependent manner. In Homo sapiens (Human), this protein is Fc receptor-like protein 1 (FCRL1).